The following is a 179-amino-acid chain: Large ribosomal subunit protein uL5 (179 aa).

It belongs to the universal ribosomal protein uL5 family. In terms of assembly, part of the 50S ribosomal subunit; part of the 5S rRNA/L5/L18/L25 subcomplex. Contacts the 5S rRNA and the P site tRNA. Forms a bridge to the 30S subunit in the 70S ribosome.

In terms of biological role, this is one of the proteins that bind and probably mediate the attachment of the 5S RNA into the large ribosomal subunit, where it forms part of the central protuberance. In the 70S ribosome it contacts protein S13 of the 30S subunit (bridge B1b), connecting the 2 subunits; this bridge is implicated in subunit movement. Contacts the P site tRNA; the 5S rRNA and some of its associated proteins might help stabilize positioning of ribosome-bound tRNAs. This Synechococcus elongatus (strain ATCC 33912 / PCC 7942 / FACHB-805) (Anacystis nidulans R2) protein is Large ribosomal subunit protein uL5.